A 513-amino-acid chain; its full sequence is Microcin J25-processing protein McjC (513 aa).

An Asparagine synthetase domain is found at 176–436 (STIDSIIDNI…FGSDIFWKKT (261 aa)).

The protein resides in the cytoplasm. Functionally, along with McjB, necessary and sufficient to process the inactive microcin J25 (McjA) precursor into the active peptide. May be involved in the formation of the amide bond between Gly-38 and Glu-53 of McjA. The protein is Microcin J25-processing protein McjC (mcjC) of Escherichia coli.